A 538-amino-acid chain; its full sequence is Neutral protease B (538 aa).

The N-terminal stretch at 1–28 (MRNLTKTSLLLAGLCTAAQMVFVTHASA) is a signal peptide. A propeptide spans 29-223 (EESIEYDHTY…VIESFNAIHE (195 aa)) (activation peptide). Residue Asp-365 coordinates Ca(2+). His-369 is a Zn(2+) binding site. Glu-370 is a catalytic residue. Residues His-373 and Glu-393 each coordinate Zn(2+). Positions 404, 406, 407, 409, 412, 415, 416, 419, and 422 each coordinate Ca(2+). The disordered stretch occupies residues 421–441 (GDSLRSLEDPSKQGNPDHYSN). Residue His-453 is the Proton donor of the active site.

It belongs to the peptidase M4 family. It depends on Zn(2+) as a cofactor.

It is found in the secreted. Its activity is regulated as follows. Protease activity can be inhibited in vitro by either a zinc specific chelator, 1,10-phenanthroline, or a metal chelator, EDTA. The enzyme is resistant to phenylmethylsulfonyl fluoride and iodoacetic acid. In terms of biological role, protease able to cleave casein in vitro. The sequence is that of Neutral protease B from Bacillus subtilis (strain 168).